Reading from the N-terminus, the 333-residue chain is G-protein coupled receptor 146 (333 aa).

Topologically, residues 1 to 22 (MWSCGPLNSTAWAEEPLCRNLR) are extracellular. N-linked (GlcNAc...) asparagine glycosylation occurs at Asn8. Residues 23 to 43 (LGLWVLSLLYLGAGVPVSLGY) traverse the membrane as a helical segment. The Cytoplasmic segment spans residues 44–64 (NALLVLANLASKNTMTMPDVY). A helical membrane pass occupies residues 65–85 (FVNMAVAGLVLTALAPAYLLG). The Extracellular portion of the chain corresponds to 86–101 (PAHSRWALWSLSSEAH). A helical transmembrane segment spans residues 102–122 (VTLLILFNVASLVTMYSTALL). The Cytoplasmic portion of the chain corresponds to 123-145 (SLDYYIERALPRTYMASVYNTRH). Residues 146 to 166 (VCGFVWGGAVLTSFSSLLFYI) form a helical membrane-spanning segment. Over 167–188 (CSHVSSRIAECARMQNTEAADA) the chain is Extracellular. A helical membrane pass occupies residues 189 to 209 (ILVLIGYVVPGLAVLYALALI). The Cytoplasmic segment spans residues 210–232 (SRIGKEDTPLDQDTSRLDPSVHR). A helical membrane pass occupies residues 233–253 (LLVATVCTQFGLWTPYYLSLG). At 254–277 (HTVLTSRGRTVEGHYLGILQVAKD) the chain is on the extracellular side. A helical membrane pass occupies residues 278-298 (LAKFLAFSSSSVTPLLYRYIN). The Cytoplasmic segment spans residues 299-333 (KAFPGKLRRLMKKMHCGRRHCSPDPSGIQQVMAQA).

It belongs to the G-protein coupled receptor 1 family.

It is found in the cell membrane. In terms of biological role, GPCR receptor required for the regulation of plasma cholesterol levels. Receptor for CHLSN, a gut derived hormone which mediates an inhibitory effect of intestinal cholesterol absorption on hepatic cholesterol synthesis. Cholesin-binding exerts an antagonistic effect by inhibiting PKA signaling and suppressing SREBF2-controlled cholesterol in the liver. The protein is G-protein coupled receptor 146 (Gpr146) of Mus musculus (Mouse).